Here is an 86-residue protein sequence, read N- to C-terminus: Small ribosomal subunit protein bS20 (86 aa).

Over residues 1 to 11 the composition is skewed to basic residues; sequence MANIKSQKKRV. The tract at residues 1-20 is disordered; the sequence is MANIKSQKKRVRTNEKAHQR.

This sequence belongs to the bacterial ribosomal protein bS20 family.

In terms of biological role, binds directly to 16S ribosomal RNA. The chain is Small ribosomal subunit protein bS20 from Bifidobacterium animalis subsp. lactis (strain AD011).